The sequence spans 325 residues: E3 ubiquitin-protein ligase SIAH2 (325 aa).

Over residues 1 to 15 (MSRPSSTGPSANKPC) the composition is skewed to polar residues. Positions 1–43 (MSRPSSTGPSANKPCSKQPPPPQTPHAPSPAAPPAAATISAAG) are disordered. Ser6 carries the phosphoserine modification. Residue Ser16 is modified to Phosphoserine; by DYRK2. Pro residues predominate over residues 17 to 33 (KQPPPPQTPHAPSPAAP). The residue at position 24 (Thr24) is a Phosphothreonine; by MAPK14. Phosphoserine; by DYRK2 and MAPK14 is present on Ser29. The segment covering 34–43 (PAAATISAAG) has biased composition (low complexity). Ser69 carries the post-translational modification Phosphoserine; by DYRK2. The RING-type zinc-finger motif lies at 81-116 (CPVCFDYVLPPILQCQAGHLVCNQCRQKLSCCPTCR). Position 120 is a phosphothreonine; by DYRK2 (Thr120). Residues 131–323 (VASAVLFPCK…LGINVTISTC (193 aa)) are SBD. The SIAH-type zinc-finger motif lies at 134-194 (AVLFPCKYAT…VMSHLMHAHK (61 aa)). Zn(2+) contacts are provided by Cys139, Cys146, His158, Cys162, Cys169, Cys176, His188, and His193.

It belongs to the SINA (Seven in absentia) family. Homodimer. Interacts with VAV1, without mediating its ubiquitin-mediated degradation. Probable component of some large E3 complex possibly composed of UBE2D1, SIAH2, CACYBP/SIP, SKP1, APC and TBL1X. Interacts with UBE2I. Interacts with UBE2E2. Interacts with PEG10, which may inhibit its activity. Interacts with PEG3 and EGLN2. Interacts with DYRK2. Interacts with SNCAIP. Interacts with NR1D1 and NR1D2. Interacts with DCC. Interacts with AXIN1. Phosphorylated at Thr-24 and Ser-29 by MAPK14, which mediates the degradation by the proteasome of EGLN3. Phosphorylated at Ser-29 by DYRK2; this increases the ubiquitin ligase activity and promotes degradation of EGLN3. Detected in brain (at protein level).

It is found in the cytoplasm. It localises to the nucleus. It catalyses the reaction S-ubiquitinyl-[E2 ubiquitin-conjugating enzyme]-L-cysteine + [acceptor protein]-L-lysine = [E2 ubiquitin-conjugating enzyme]-L-cysteine + N(6)-ubiquitinyl-[acceptor protein]-L-lysine.. Its pathway is protein modification; protein ubiquitination. Functionally, E3 ubiquitin-protein ligase that mediates ubiquitination and subsequent proteasomal degradation of target proteins. E3 ubiquitin ligases accept ubiquitin from an E2 ubiquitin-conjugating enzyme in the form of a thioester and then directly transfers the ubiquitin to targeted substrates. Mediates E3 ubiquitin ligase activity either through direct binding to substrates or by functioning as the essential RING domain subunit of larger E3 complexes. Mediates ubiquitination and proteasomal degradation of DYRK2 in response to hypoxia. Promotes monoubiquitination of SNCA. Triggers the ubiquitin-mediated degradation of many substrates, including proteins involved in transcription regulation (GPS2, POU2AF1, PML, NCOR1), a cell surface receptor (DCC), an antiapoptotic protein (BAG1), and a protein involved in synaptic vesicle function in neurons (SYP). It is thereby involved in apoptosis, tumor suppression, cell cycle, transcription and signaling processes. Has some overlapping function with SIAH1. Triggers the ubiquitin-mediated degradation of TRAF2, whereas SIAH1 does not. Regulates cellular clock function via ubiquitination of circadian transcriptional repressors NR1D1 and NR1D2 leading to their proteasomal degradation. Plays an important role in mediating the rhythmic degradation/clearance of NR1D1 and NR1D2 contributing to their circadian profile of protein abundance. Mediates ubiquitination and degradation of EGLN2 and EGLN3 in response to the unfolded protein response (UPR), leading to their degradation and subsequent stabilization of ATF4. Also part of the Wnt signaling pathway in which it mediates the Wnt-induced ubiquitin-mediated proteasomal degradation of AXIN1. The sequence is that of E3 ubiquitin-protein ligase SIAH2 (Siah2) from Rattus norvegicus (Rat).